The primary structure comprises 453 residues: Phosphoglucosamine mutase (453 aa).

The active-site Phosphoserine intermediate is Ser110. Mg(2+) is bound by residues Ser110, Asp248, Asp250, and Asp252. Ser110 carries the phosphoserine modification.

This sequence belongs to the phosphohexose mutase family. Mg(2+) is required as a cofactor. In terms of processing, activated by phosphorylation.

The catalysed reaction is alpha-D-glucosamine 1-phosphate = D-glucosamine 6-phosphate. Its function is as follows. Catalyzes the conversion of glucosamine-6-phosphate to glucosamine-1-phosphate. In Mycolicibacterium smegmatis (strain ATCC 700084 / mc(2)155) (Mycobacterium smegmatis), this protein is Phosphoglucosamine mutase.